A 315-amino-acid polypeptide reads, in one-letter code: Methionyl-tRNA formyltransferase (315 aa).

Residue 113–116 (SILP) coordinates (6S)-5,6,7,8-tetrahydrofolate.

Belongs to the Fmt family.

It catalyses the reaction L-methionyl-tRNA(fMet) + (6R)-10-formyltetrahydrofolate = N-formyl-L-methionyl-tRNA(fMet) + (6S)-5,6,7,8-tetrahydrofolate + H(+). Attaches a formyl group to the free amino group of methionyl-tRNA(fMet). The formyl group appears to play a dual role in the initiator identity of N-formylmethionyl-tRNA by promoting its recognition by IF2 and preventing the misappropriation of this tRNA by the elongation apparatus. This chain is Methionyl-tRNA formyltransferase, found in Vibrio vulnificus (strain CMCP6).